A 391-amino-acid polypeptide reads, in one-letter code: Processive diacylglycerol beta-glucosyltransferase (391 aa).

This sequence belongs to the glycosyltransferase 28 family. UgtP subfamily.

It is found in the cell membrane. The enzyme catalyses a 1,2-diacyl-3-O-(beta-D-glucopyranosyl)-sn-glycerol + UDP-alpha-D-glucose = a 1,2-diacyl-3-O-(beta-D-Glc-(1-&gt;6)-beta-D-Glc)-sn-glycerol + UDP + H(+). It catalyses the reaction a 1,2-diacyl-sn-glycerol + UDP-alpha-D-glucose = a 1,2-diacyl-3-O-(beta-D-glucopyranosyl)-sn-glycerol + UDP + H(+). It participates in glycolipid metabolism; diglucosyl-diacylglycerol biosynthesis. Functionally, processive glucosyltransferase involved in the biosynthesis of both the bilayer- and non-bilayer-forming membrane glucolipids. Is able to successively transfer two glucosyl residues to diacylglycerol (DAG), thereby catalyzing the formation of beta-monoglucosyl-DAG (3-O-(beta-D-glucopyranosyl)-1,2-diacyl-sn-glycerol) and beta-diglucosyl-DAG (3-O-(beta-D-glucopyranosyl-beta-(1-&gt;6)-D-glucopyranosyl)-1,2-diacyl-sn-glycerol). Beta-diglucosyl-DAG is the predominant glycolipid found in Bacillales and is also used as a membrane anchor for lipoteichoic acid (LTA). In Staphylococcus aureus (strain Mu3 / ATCC 700698), this protein is Processive diacylglycerol beta-glucosyltransferase.